We begin with the raw amino-acid sequence, 43 residues long: Holotricin-1 (43 aa).

3 disulfides stabilise this stretch: Cys3-Cys34, Cys20-Cys39, and Cys24-Cys41.

It belongs to the invertebrate defensin family. Type 1 subfamily. As to expression, hemolymph.

Its subcellular location is the secreted. Shows potent antibacterial activity against Gram-positive bacteria. The sequence is that of Holotricin-1 from Holotrichia diomphalia (Korean black chafer).